The primary structure comprises 422 residues: Histidine--tRNA ligase (422 aa).

It belongs to the class-II aminoacyl-tRNA synthetase family. As to quaternary structure, homodimer.

The protein resides in the cytoplasm. It carries out the reaction tRNA(His) + L-histidine + ATP = L-histidyl-tRNA(His) + AMP + diphosphate + H(+). The chain is Histidine--tRNA ligase from Alcanivorax borkumensis (strain ATCC 700651 / DSM 11573 / NCIMB 13689 / SK2).